A 332-amino-acid chain; its full sequence is Probable farnesyl diphosphate synthase (332 aa).

Isopentenyl diphosphate contacts are provided by lysine 75, arginine 78, and histidine 107. Mg(2+) is bound by residues aspartate 114 and aspartate 120. Residue arginine 125 participates in (2E)-geranyl diphosphate binding. Isopentenyl diphosphate is bound at residue arginine 126. (2E)-geranyl diphosphate contacts are provided by lysine 208, serine 209, glutamine 250, and lysine 267.

It belongs to the FPP/GGPP synthase family. It depends on Mg(2+) as a cofactor.

It is found in the cytoplasm. It catalyses the reaction isopentenyl diphosphate + (2E)-geranyl diphosphate = (2E,6E)-farnesyl diphosphate + diphosphate. In Bradyrhizobium diazoefficiens (strain JCM 10833 / BCRC 13528 / IAM 13628 / NBRC 14792 / USDA 110), this protein is Probable farnesyl diphosphate synthase (fppS).